The chain runs to 269 residues: Tryptophan synthase alpha chain (269 aa).

Residues E49 and D60 each act as proton acceptor in the active site.

This sequence belongs to the TrpA family. In terms of assembly, tetramer of two alpha and two beta chains.

The enzyme catalyses (1S,2R)-1-C-(indol-3-yl)glycerol 3-phosphate + L-serine = D-glyceraldehyde 3-phosphate + L-tryptophan + H2O. It participates in amino-acid biosynthesis; L-tryptophan biosynthesis; L-tryptophan from chorismate: step 5/5. In terms of biological role, the alpha subunit is responsible for the aldol cleavage of indoleglycerol phosphate to indole and glyceraldehyde 3-phosphate. The protein is Tryptophan synthase alpha chain of Photobacterium profundum (strain SS9).